The chain runs to 389 residues: Na(+)/H(+) antiporter NhaA (389 aa).

A run of 10 helical transmembrane segments spans residues 8–28, 48–68, 91–111, 119–139, 173–193, 214–234, 262–282, 288–308, 327–347, and 361–381; these read INFL…ALVW, ISLH…MAAI, MATL…NALI, GWGI…RVVF, NPVA…AYLL, AGLY…VPFL, WKIF…GVEF, LTWL…FLMG, LLVA…VSGV, and GALF…VLGI.

Belongs to the NhaA Na(+)/H(+) (TC 2.A.33) antiporter family.

It localises to the cell membrane. It catalyses the reaction Na(+)(in) + 2 H(+)(out) = Na(+)(out) + 2 H(+)(in). Functionally, na(+)/H(+) antiporter that extrudes sodium in exchange for external protons. This chain is Na(+)/H(+) antiporter NhaA, found in Desulfitobacterium hafniense (strain DSM 10664 / DCB-2).